A 98-amino-acid chain; its full sequence is Cell cycle protein GpsB (98 aa).

Residues 34–71 (LDLIIKDYEAFQQEIDELRQENARLKRQVEELQKRPAM) adopt a coiled-coil conformation.

Belongs to the GpsB family. In terms of assembly, forms polymers through the coiled coil domains. Interacts with PBP1, MreC and EzrA.

The protein resides in the cytoplasm. Its function is as follows. Divisome component that associates with the complex late in its assembly, after the Z-ring is formed, and is dependent on DivIC and PBP2B for its recruitment to the divisome. Together with EzrA, is a key component of the system that regulates PBP1 localization during cell cycle progression. Its main role could be the removal of PBP1 from the cell pole after pole maturation is completed. Also contributes to the recruitment of PBP1 to the division complex. Not essential for septum formation. This is Cell cycle protein GpsB from Geobacillus kaustophilus (strain HTA426).